The following is a 753-amino-acid chain: Catalase-peroxidase (753 aa).

The segment at residues 90 to 238 (WHSAGTYRVT…LASSHMGLIY (149 aa)) is a cross-link (tryptophyl-tyrosyl-methioninium (Trp-Tyr) (with M-264)). His91 acts as the Proton acceptor in catalysis. The segment at 196-220 (SEGQEGHEGHGVVQGDESKKQHTDI) is disordered. The tryptophyl-tyrosyl-methioninium (Tyr-Met) (with W-90) cross-link spans 238 to 264 (YVNPEGPDGIPDPVASAKDIRVTFGRM). His279 serves as a coordination point for heme b.

The protein belongs to the peroxidase family. Peroxidase/catalase subfamily. As to quaternary structure, homodimer or homotetramer. Requires heme b as cofactor. In terms of processing, formation of the three residue Trp-Tyr-Met cross-link is important for the catalase, but not the peroxidase activity of the enzyme.

It is found in the cytoplasm. It carries out the reaction H2O2 + AH2 = A + 2 H2O. The enzyme catalyses 2 H2O2 = O2 + 2 H2O. With respect to regulation, inhibited by KCN. Its function is as follows. Bifunctional enzyme with both catalase and broad-spectrum peroxidase activity. This Neurospora crassa (strain ATCC 24698 / 74-OR23-1A / CBS 708.71 / DSM 1257 / FGSC 987) protein is Catalase-peroxidase.